A 323-amino-acid polypeptide reads, in one-letter code: PI-PLC X domain-containing protein 1 (323 aa).

Positions 30-206 (RLWDVPLHHL…QVIVSYEDES (177 aa)) constitute a PI-PLC X-box domain.

Widely expressed.

The protein localises to the cytoplasm. The chain is PI-PLC X domain-containing protein 1 (PLCXD1) from Homo sapiens (Human).